A 551-amino-acid chain; its full sequence is Lysine--tRNA ligase (551 aa).

Positions 54 to 62 (PSGLPHIGT) match the 'HIGH' region motif. The 'KMSKS' region motif lies at 303-307 (KISKS). Lys-306 lines the ATP pocket.

This sequence belongs to the class-I aminoacyl-tRNA synthetase family.

It localises to the cytoplasm. It catalyses the reaction tRNA(Lys) + L-lysine + ATP = L-lysyl-tRNA(Lys) + AMP + diphosphate. The polypeptide is Lysine--tRNA ligase (Brucella melitensis biotype 1 (strain ATCC 23456 / CCUG 17765 / NCTC 10094 / 16M)).